The primary structure comprises 412 residues: FAD-dependent monooxygenase nscC (412 aa).

The N-terminal stretch at 1–21 (MGKQQETILIIGAGIAGLTTS) is a signal peptide. Residues Glu-35 and Ala-46 each coordinate FAD. A glycan (N-linked (GlcNAc...) asparagine) is linked at Asn-92. Arg-119 contributes to the FAD binding site. N-linked (GlcNAc...) asparagine glycans are attached at residues Asn-170 and Asn-231. FAD-binding residues include Asp-326 and Gly-339.

Belongs to the paxM FAD-dependent monooxygenase family. FAD is required as a cofactor.

It participates in secondary metabolite biosynthesis. In terms of biological role, FAD-dependent monooxygenase; part of the gene cluster that mediates the biosynthesis of neosartoricin B, a prenylated anthracenone that probably exhibits T-cell antiproliferative activity, suggestive of a physiological role as an immunosuppressive agent. The non-reducing polyketide synthase nscA probably synthesizes and cyclizes the decaketide backbone. The hydrolase nscB then mediates the product release through hydrolysis followed by spontaneous decarboxylation. The prenyltransferase nscD catalyzes the addition of the dimethylallyl group to the aromatic C5. The FAD-dependent monooxygenase nscC is then responsible for the stereospecific hydroxylation at C2. Neosartoricin B can be converted into two additional compounds neosartoricins C and D. Neosartoricin C is a spirocyclic compound that is cyclized through the attack of C3 hydroxyl on C14, followed by dehydration. On the other hand, neosartoricin D is a further cyclized compound in which attack of C2 on C14 in neosartoricin C results in the formation of the acetal-containing dioxabicyclo-octanone ring. Both of these compounds are novel and possibly represent related metabolites of the gene cluster. This is FAD-dependent monooxygenase nscC from Trichophyton verrucosum (strain HKI 0517).